The sequence spans 246 residues: MEPDLSFRGRRALVTGAGKGIGRAVAVALCKAGARVTALSRTAADLESLVRECPGIEPLCLDLADWDATEAAVGAAGPFELLVNNAAVAMLQPFLQVTREAVERSFDVNFRAVLHVSQIVARQMIAQGLPGAIVNVSSQASQRALRDHAVYCSTKSALDMLSKVMAMELGPHKIRVNTVNPTVVMTDMGRINWSDPQKSAAMINRIPLGKFAEVDDVVNSILFLLSDKSAMTTGSSLMVDGGFLVS.

13–41 lines the NADP(+) pocket; the sequence is LVTGAGKGIGRAVAVALCKAGARVTALSR. Serine 138 is a substrate binding site. The active-site Proton acceptor is the tyrosine 151. An NADP(+)-binding site is contributed by lysine 155.

This sequence belongs to the short-chain dehydrogenases/reductases (SDR) family. In terms of assembly, homotetramer. Post-translationally, the N-terminus is blocked. Highly expressed in kidney, and also found in high amounts in liver and testis. Low expression seen in all other tissues tested.

The protein localises to the cytoplasm. It carries out the reaction D-threitol + NADP(+) = D-erythrulose + NADPH + H(+). The catalysed reaction is xylitol + NADP(+) = L-xylulose + NADPH + H(+). Catalyzes the reduction of D-erythrulose to D-threitol with the concomitant oxidation of NAD(P)H to NAD(P)(+). NADH is less effective than NADPH. May also catalyze the reduction of L-xylulose. This is D-erythrulose reductase (DER) from Gallus gallus (Chicken).